Reading from the N-terminus, the 231-residue chain is ATP phosphoribosyltransferase (231 aa).

Belongs to the ATP phosphoribosyltransferase family. Short subfamily. In terms of assembly, heteromultimer composed of HisG and HisZ subunits.

The protein localises to the cytoplasm. It carries out the reaction 1-(5-phospho-beta-D-ribosyl)-ATP + diphosphate = 5-phospho-alpha-D-ribose 1-diphosphate + ATP. It participates in amino-acid biosynthesis; L-histidine biosynthesis; L-histidine from 5-phospho-alpha-D-ribose 1-diphosphate: step 1/9. Catalyzes the condensation of ATP and 5-phosphoribose 1-diphosphate to form N'-(5'-phosphoribosyl)-ATP (PR-ATP). Has a crucial role in the pathway because the rate of histidine biosynthesis seems to be controlled primarily by regulation of HisG enzymatic activity. The protein is ATP phosphoribosyltransferase (hisG) of Sinorhizobium fredii (strain NBRC 101917 / NGR234).